A 208-amino-acid chain; its full sequence is 3-demethoxyubiquinol 3-hydroxylase (208 aa).

6 residues coordinate Fe cation: E57, E87, H90, E139, E171, and H174.

Belongs to the COQ7 family. It depends on Fe cation as a cofactor.

The protein resides in the cell membrane. It carries out the reaction a 5-methoxy-2-methyl-3-(all-trans-polyprenyl)benzene-1,4-diol + AH2 + O2 = a 3-demethylubiquinol + A + H2O. The protein operates within cofactor biosynthesis; ubiquinone biosynthesis. Catalyzes the hydroxylation of 2-nonaprenyl-3-methyl-6-methoxy-1,4-benzoquinol during ubiquinone biosynthesis. This chain is 3-demethoxyubiquinol 3-hydroxylase, found in Burkholderia ambifaria (strain ATCC BAA-244 / DSM 16087 / CCUG 44356 / LMG 19182 / AMMD) (Burkholderia cepacia (strain AMMD)).